An 853-amino-acid chain; its full sequence is DNA mismatch repair protein MutS (853 aa).

614 to 621 contacts ATP; it reads GPNMGGKS.

The protein belongs to the DNA mismatch repair MutS family.

Functionally, this protein is involved in the repair of mismatches in DNA. It is possible that it carries out the mismatch recognition step. This protein has a weak ATPase activity. This Escherichia fergusonii (strain ATCC 35469 / DSM 13698 / CCUG 18766 / IAM 14443 / JCM 21226 / LMG 7866 / NBRC 102419 / NCTC 12128 / CDC 0568-73) protein is DNA mismatch repair protein MutS.